Consider the following 384-residue polypeptide: Toluene efflux pump periplasmic linker protein TtgA (384 aa).

The N-terminal stretch at 1–22 (MQFKPAVTALVSAVALATLLSG) is a signal peptide. C23 is lipidated: N-palmitoyl cysteine. C23 is lipidated: S-diacylglycerol cysteine. Residues 115–155 (LAERYKQLIDEQAVSKQEYDDANAKRLQAEASLKSAQIDLR) adopt a coiled-coil conformation. Positions 362–384 (ATNVKKPAGPDQANAAKADAKAE) are disordered. The span at 368 to 378 (PAGPDQANAAK) shows a compositional bias: low complexity.

This sequence belongs to the membrane fusion protein (MFP) (TC 8.A.1) family.

The protein resides in the cell inner membrane. Functionally, the periplasmic linker protein component of a constitutive organic solvent efflux system. Involved in export of toluene, styrene, m-xylene, propylbenzene and ethylbenzene. Also exports AMP and the antibiotics carbenicillin, nalidixic acid, chloramphenicol and tetracycline. This is Toluene efflux pump periplasmic linker protein TtgA (ttgA) from Pseudomonas putida (strain DOT-T1E).